Reading from the N-terminus, the 464-residue chain is Na(+)/H(+) antiporter NhaA 1 (464 aa).

The next 11 membrane-spanning stretches (helical) occupy residues 41–61, 85–105, 121–141, 150–170, 180–200, 207–227, 234–254, 329–349, 363–383, 399–419, and 428–448; these read GGLI…SPLA, LHHW…GLEL, VLPI…YMSL, GWGI…ALLA, FLVA…AVFY, SFLI…MIGI, FFVG…ATLA, VAFF…IDFG, VVFG…WLAI, IIGA…IAEL, and IIQA…AGYL.

This sequence belongs to the NhaA Na(+)/H(+) (TC 2.A.33) antiporter family.

Its subcellular location is the cell inner membrane. It catalyses the reaction Na(+)(in) + 2 H(+)(out) = Na(+)(out) + 2 H(+)(in). Its function is as follows. Na(+)/H(+) antiporter that extrudes sodium in exchange for external protons. This is Na(+)/H(+) antiporter NhaA 1 from Saccharophagus degradans (strain 2-40 / ATCC 43961 / DSM 17024).